A 358-amino-acid polypeptide reads, in one-letter code: Very long chain fatty acid elongase AAEL008004 (358 aa).

The next 7 membrane-spanning stretches (helical) occupy residues Trp-26 to Val-46, Leu-66 to Ile-86, Ala-115 to Met-135, Val-147 to Gly-167, Phe-171 to Ala-191, Thr-207 to Ile-227, and Ala-234 to Tyr-254. The segment covering Ser-285–Thr-295 has biased composition (polar residues). The segment at Ser-285–Leu-322 is disordered. Positions His-299 to Ser-310 are enriched in basic residues. A compositionally biased stretch (polar residues) spans Asn-311–Leu-322.

The protein belongs to the ELO family.

It localises to the membrane. It carries out the reaction a very-long-chain acyl-CoA + malonyl-CoA + H(+) = a very-long-chain 3-oxoacyl-CoA + CO2 + CoA. Its function is as follows. Could be implicated in synthesis of very long chain fatty acids. This Aedes aegypti (Yellowfever mosquito) protein is Very long chain fatty acid elongase AAEL008004.